Consider the following 177-residue polypeptide: ATP synthase subunit delta (177 aa).

It belongs to the ATPase delta chain family. As to quaternary structure, F-type ATPases have 2 components, F(1) - the catalytic core - and F(0) - the membrane proton channel. F(1) has five subunits: alpha(3), beta(3), gamma(1), delta(1), epsilon(1). F(0) has three main subunits: a(1), b(2) and c(10-14). The alpha and beta chains form an alternating ring which encloses part of the gamma chain. F(1) is attached to F(0) by a central stalk formed by the gamma and epsilon chains, while a peripheral stalk is formed by the delta and b chains.

The protein resides in the cell inner membrane. In terms of biological role, f(1)F(0) ATP synthase produces ATP from ADP in the presence of a proton or sodium gradient. F-type ATPases consist of two structural domains, F(1) containing the extramembraneous catalytic core and F(0) containing the membrane proton channel, linked together by a central stalk and a peripheral stalk. During catalysis, ATP synthesis in the catalytic domain of F(1) is coupled via a rotary mechanism of the central stalk subunits to proton translocation. This protein is part of the stalk that links CF(0) to CF(1). It either transmits conformational changes from CF(0) to CF(1) or is implicated in proton conduction. This Shewanella oneidensis (strain ATCC 700550 / JCM 31522 / CIP 106686 / LMG 19005 / NCIMB 14063 / MR-1) protein is ATP synthase subunit delta.